A 700-amino-acid polypeptide reads, in one-letter code: Transketolase (700 aa).

His-45 contributes to the substrate binding site. Residues Thr-48, His-85, and 133–135 (GPL) contribute to the thiamine diphosphate site. Asp-177 contacts Mg(2+). Thiamine diphosphate-binding residues include Gly-178 and Asn-207. Mg(2+)-binding residues include Asn-207 and Ile-209. Substrate contacts are provided by His-283, Arg-378, and Ser-405. His-283 lines the thiamine diphosphate pocket. Glu-441 functions as the Proton donor in the catalytic mechanism. Residue Phe-467 coordinates thiamine diphosphate. The substrate site is built by His-491, Asp-499, and Arg-552.

This sequence belongs to the transketolase family. Homodimer. Mg(2+) is required as a cofactor. Requires Ca(2+) as cofactor. It depends on Mn(2+) as a cofactor. Co(2+) serves as cofactor. The cofactor is thiamine diphosphate.

The enzyme catalyses D-sedoheptulose 7-phosphate + D-glyceraldehyde 3-phosphate = aldehydo-D-ribose 5-phosphate + D-xylulose 5-phosphate. Its function is as follows. Catalyzes the transfer of a two-carbon ketol group from a ketose donor to an aldose acceptor, via a covalent intermediate with the cofactor thiamine pyrophosphate. The protein is Transketolase (tkt) of Mycobacterium bovis (strain ATCC BAA-935 / AF2122/97).